The following is a 92-amino-acid chain: Small ribosomal subunit protein uS19 (92 aa).

This sequence belongs to the universal ribosomal protein uS19 family.

Its function is as follows. Protein S19 forms a complex with S13 that binds strongly to the 16S ribosomal RNA. The protein is Small ribosomal subunit protein uS19 of Vibrio parahaemolyticus serotype O3:K6 (strain RIMD 2210633).